The following is a 217-amino-acid chain: MAHSIWHEKIKSFLPEHYYGRINHFLDEAYASGLVYPQRENVFKALQVTPLEETKVLILGQDPYHGPKQAQGISFSVPEEISAPPSLINILKELADDIGPRDHHDLSTWASQGVLLLNACLTVPAGQANGHAGLIWEPFTDAVIKVLNEKDSPVVFILWGAYARKKKAFITNPKHHIIESPHPSPLSSYRGFFGSKPFSRTNAMLEKEGMIGIDWLQ.

Residue aspartate 62 is the Proton acceptor of the active site.

The protein belongs to the uracil-DNA glycosylase (UDG) superfamily. UNG family.

The protein localises to the cytoplasm. It carries out the reaction Hydrolyzes single-stranded DNA or mismatched double-stranded DNA and polynucleotides, releasing free uracil.. Its function is as follows. Excises uracil residues from the DNA which can arise as a result of misincorporation of dUMP residues by DNA polymerase or due to deamination of cytosine. This Streptococcus pyogenes serotype M6 (strain ATCC BAA-946 / MGAS10394) protein is Uracil-DNA glycosylase.